A 2161-amino-acid chain; its full sequence is SH3 and multiple ankyrin repeat domains protein 1 (2161 aa).

A disordered region spans residues 1 to 53 (MTHSPATSEDEERHSASECPEGGSESDSSPDGPGRGPRGTRGQGSGAPGSLAS). Positions 17-32 (SECPEGGSESDSSPDG) are enriched in low complexity. Positions 33–47 (PGRGPRGTRGQGSGA) are enriched in gly residues. Y186 bears the Phosphotyrosine mark. 6 ANK repeats span residues 212-245 (SGET…FRAR), 246-278 (DGMT…YKDR), 279-312 (RGLT…IADE), 313-345 (NGWQ…AQNA), 346-378 (SGNT…VKNN), and 379-395 (NGQT…NFEL). Disordered stretches follow at residues 412–433 (ESPK…VPPA) and 455–546 (GAAS…SRGR). Residues 455–479 (GAASSGAPGPTSGSQGQSQPSAPTT) show a composition bias toward low complexity. The segment covering 527–542 (PAGGTGGSGGPGGSLG) has biased composition (gly residues). Residue S540 is modified to Phosphoserine. Omega-N-methylarginine is present on R544. The 60-residue stretch at 554 to 613 (VPGRSFMAVKSYQAQAEGEISLSKGEKIKVLSIGEGGFWEGQVKGRVGWFPSDCLEEVAN) folds into the SH3 domain. Positions 663-757 (TVLLQKKDSE…TLMVKVVMVT (95 aa)) constitute a PDZ domain. 2 positions are modified to phosphoserine: S671 and S791. A disordered region spans residues 832–886 (TISASESPGPGGLASLGKHRPKGFFATESSFDPHHRAQPSYERPSFLPPGPGLML). S890 carries the post-translational modification Phosphoserine. Disordered stretches follow at residues 909–1229 (SRSL…LDFT), 1241–1289 (RREG…KSID), 1353–1720 (LGLA…GVAS), 1734–1785 (GQAF…PTSP), 1827–1860 (LPTA…QPQA), 1892–1983 (PWAR…TRHL), and 1996–2023 (RRAP…LPIL). The segment covering 920–939 (IPPPPTTSPPEPPYSTPPVP) has biased composition (pro residues). Position 950 is an omega-N-methylarginine (R950). The segment covering 996-1020 (AHHHPPHHHHHHAPPPQPHHHHAHP) has biased composition (basic residues). 3 positions are modified to omega-N-methylarginine: R1051, R1090, and R1101. The segment covering 1127–1144 (PPAPSPTSPASPQPPPAV) has biased composition (pro residues). The span at 1164-1181 (STSSSGRSSQGSSTEAEP) shows a compositional bias: low complexity. Over residues 1199–1220 (SPAPAMSPVPPSPSPVPTPASP) the composition is skewed to pro residues. A compositionally biased stretch (basic and acidic residues) spans 1241–1252 (RREGGWQNEARR). The residue at position 1253 (R1253) is an Asymmetric dimethylarginine. A Phosphoserine modification is found at S1287. Over residues 1359-1368 (ARERALKESS) the composition is skewed to basic and acidic residues. The span at 1374 to 1391 (PQPPPRPPSPRYEAPPPT) shows a compositional bias: pro residues. The residue at position 1423 (R1423) is an Omega-N-methylarginine. At S1436 the chain carries Phosphoserine. Composition is skewed to pro residues over residues 1517–1532 (GVPP…PSPT) and 1583–1609 (PLTP…PPPA). Positions 1618 to 1636 (DSTASSLTSYDSEVATLTQ) are enriched in polar residues. Positions 1644–1670 (DPHPPGPPAPAAPAPAAPQPGPDPPPG) are enriched in pro residues. Residues 1678 to 1688 (VDSRSSSDHPL) show a composition bias toward basic and acidic residues. Positions 1692–1702 (SSASTLSSLSA) are enriched in low complexity. 2 stretches are compositionally biased toward gly residues: residues 1703-1718 (EGGG…GAGV) and 1764-1774 (ASGGLRPGPSG). Residues 1775-1785 (GLRDPVTPTSP) are compositionally biased toward low complexity. A compositionally biased stretch (pro residues) spans 1844–1855 (PGPPPPPLPGPL). At R1895 the chain carries Omega-N-methylarginine. 3 stretches are compositionally biased toward low complexity: residues 1917 to 1940 (SSLQ…VSSL), 1954 to 1980 (TGTG…STST), and 1996 to 2006 (RRAPSPSLLPA). R2016, R2036, and R2074 each carry omega-N-methylarginine. Positions 2098–2161 (WTKFDVADWL…DRALKFFLER (64 aa)) constitute an SAM domain.

This sequence belongs to the SHANK family. In terms of assembly, may homomultimerize via its SAM domain. Interacts with the C-terminus of SSTR2 via the PDZ domain. Interacts with IGSF9, SHARPIN, SPTAN1, HOMER1 and DLGAP1/GKAP isoforms 1 and 2. Part of a complex with DLG4/PSD-95 and DLGAP1/GKAP. Interacts with BAIAP2. Interacts with HOMER1 and HOMER3. Expressed in brain particularly in the amygdala, hippocampus, substantia nigra and thalamus. Isoform 2 seems to be expressed ubiquitously.

It is found in the cytoplasm. Its subcellular location is the postsynaptic density. The protein resides in the synapse. Its function is as follows. Seems to be an adapter protein in the postsynaptic density (PSD) of excitatory synapses that interconnects receptors of the postsynaptic membrane including NMDA-type and metabotropic glutamate receptors via complexes with GKAP/PSD-95 and Homer, respectively, and the actin-based cytoskeleton. Plays a role in the structural and functional organization of the dendritic spine and synaptic junction. The polypeptide is SH3 and multiple ankyrin repeat domains protein 1 (SHANK1) (Homo sapiens (Human)).